A 433-amino-acid chain; its full sequence is Phosphoglycerate kinase, chloroplastic (433 aa).

Residues 1 to 28 (GASFSLHVLSKINSYKSQSTKPIRGVAS) constitute a chloroplast transit peptide. (2R)-3-phosphoglycerate-binding residues include alanine 51, aspartate 52, asparagine 54, arginine 68, serine 90, histidine 91, glycine 93, arginine 94, arginine 149, histidine 181, and arginine 182. Glycine 227 contacts ADP. Glycine 227 lines the CDP pocket. AMP contacts are provided by lysine 229 and lysine 233. Residue lysine 233 participates in ATP binding. Residue glycine 251 coordinates ADP. Residue glycine 251 participates in CDP binding. Positions 252 and 324 each coordinate AMP. Residues glycine 252 and glycine 324 each coordinate ATP. CDP-binding residues include glycine 349 and phenylalanine 354. Phenylalanine 354 serves as a coordination point for ADP. Glutamate 355 serves as a coordination point for AMP. Glutamate 355, aspartate 386, and serine 387 together coordinate ATP. Aspartate 386 lines the Mg(2+) pocket.

It belongs to the phosphoglycerate kinase family. As to quaternary structure, monomer. Requires Mg(2+) as cofactor.

It is found in the plastid. The protein resides in the chloroplast. It catalyses the reaction (2R)-3-phosphoglycerate + ATP = (2R)-3-phospho-glyceroyl phosphate + ADP. The protein operates within carbohydrate biosynthesis; Calvin cycle. The polypeptide is Phosphoglycerate kinase, chloroplastic (Spinacia oleracea (Spinach)).